The following is a 60-amino-acid chain: Large ribosomal subunit protein uL30 (60 aa).

Belongs to the universal ribosomal protein uL30 family. As to quaternary structure, part of the 50S ribosomal subunit.

The protein is Large ribosomal subunit protein uL30 of Salinispora arenicola (strain CNS-205).